Here is a 176-residue protein sequence, read N- to C-terminus: Large ribosomal subunit protein uL6 (176 aa).

This sequence belongs to the universal ribosomal protein uL6 family. Part of the 50S ribosomal subunit.

Its function is as follows. This protein binds to the 23S rRNA, and is important in its secondary structure. It is located near the subunit interface in the base of the L7/L12 stalk, and near the tRNA binding site of the peptidyltransferase center. This chain is Large ribosomal subunit protein uL6, found in Lactobacillus acidophilus (strain ATCC 700396 / NCK56 / N2 / NCFM).